Here is a 142-residue protein sequence, read N- to C-terminus: Alpha-lactalbumin (142 aa).

Positions 1–19 (MMSFVSLLLVGILFHATQA) are cleaved as a signal peptide. The region spanning 20 to 142 (EQLTKCEVFR…KLDQWLCEKL (123 aa)) is the C-type lysozyme domain. 4 disulfides stabilise this stretch: cysteine 25/cysteine 139, cysteine 47/cysteine 130, cysteine 80/cysteine 96, and cysteine 92/cysteine 110. A glycan (N-linked (GlcNAc...) asparagine) is linked at asparagine 64. Ca(2+)-binding residues include lysine 98, aspartate 101, aspartate 103, aspartate 106, and aspartate 107.

Belongs to the glycosyl hydrolase 22 family. As to quaternary structure, lactose synthase (LS) is a heterodimer of a catalytic component, beta1,4-galactosyltransferase (beta4Gal-T1) and a regulatory component, alpha-lactalbumin (LA). As to expression, mammary gland specific. Secreted in milk.

It localises to the secreted. Functionally, regulatory subunit of lactose synthase, changes the substrate specificity of galactosyltransferase in the mammary gland making glucose a good acceptor substrate for this enzyme. This enables LS to synthesize lactose, the major carbohydrate component of milk. In other tissues, galactosyltransferase transfers galactose onto the N-acetylglucosamine of the oligosaccharide chains in glycoproteins. The chain is Alpha-lactalbumin (LALBA) from Bos taurus (Bovine).